Here is a 662-residue protein sequence, read N- to C-terminus: DNA ligase (662 aa).

NAD(+) contacts are provided by residues 32 to 36, 81 to 82, and Glu112; these read DAEYD and SL. Catalysis depends on Lys114, which acts as the N6-AMP-lysine intermediate. Residues Arg135, Glu170, Lys286, and Lys310 each contribute to the NAD(+) site. The Zn(2+) site is built by Cys402, Cys405, Cys420, and Cys425. A BRCT domain is found at 583 to 662; that stretch reads PKGGPLTGST…AELHAMLRGE (80 aa).

Belongs to the NAD-dependent DNA ligase family. LigA subfamily. Mg(2+) serves as cofactor. The cofactor is Mn(2+).

It catalyses the reaction NAD(+) + (deoxyribonucleotide)n-3'-hydroxyl + 5'-phospho-(deoxyribonucleotide)m = (deoxyribonucleotide)n+m + AMP + beta-nicotinamide D-nucleotide.. DNA ligase that catalyzes the formation of phosphodiester linkages between 5'-phosphoryl and 3'-hydroxyl groups in double-stranded DNA using NAD as a coenzyme and as the energy source for the reaction. It is essential for DNA replication and repair of damaged DNA. This Solibacter usitatus (strain Ellin6076) protein is DNA ligase.